We begin with the raw amino-acid sequence, 587 residues long: Aspartate--tRNA ligase (587 aa).

Glu-174 provides a ligand contact to L-aspartate. An aspartate region spans residues 198–201 (QITK). Arg-220 serves as a coordination point for L-aspartate. ATP is bound by residues 220–222 (RDE) and Gln-229. His-443 is an L-aspartate binding site. Glu-477 serves as a coordination point for ATP. Arg-484 is an L-aspartate binding site. An ATP-binding site is contributed by 529 to 532 (GLDR).

This sequence belongs to the class-II aminoacyl-tRNA synthetase family. Type 1 subfamily. In terms of assembly, homodimer.

Its subcellular location is the cytoplasm. The enzyme catalyses tRNA(Asp) + L-aspartate + ATP = L-aspartyl-tRNA(Asp) + AMP + diphosphate. Functionally, catalyzes the attachment of L-aspartate to tRNA(Asp) in a two-step reaction: L-aspartate is first activated by ATP to form Asp-AMP and then transferred to the acceptor end of tRNA(Asp). The polypeptide is Aspartate--tRNA ligase (Streptococcus pneumoniae serotype 2 (strain D39 / NCTC 7466)).